Reading from the N-terminus, the 349-residue chain is Glucose 1-dehydrogenase 1 (349 aa).

Cys39 provides a ligand contact to Zn(2+). Residue Thr41 coordinates substrate. Residues His64 and Glu65 each contribute to the Zn(2+) site. Positions 110 and 146 each coordinate substrate. A Zn(2+)-binding site is contributed by Glu146. Residues 178–181 (AGPI), 260–262 (LGV), and 289–291 (SVN) contribute to the NADP(+) site. Asn291 is a substrate binding site.

Belongs to the zinc-containing alcohol dehydrogenase family. Glucose 1-dehydrogenase subfamily. Requires Zn(2+) as cofactor.

It carries out the reaction D-glucose + NAD(+) = D-glucono-1,5-lactone + NADH + H(+). The enzyme catalyses D-glucose + NADP(+) = D-glucono-1,5-lactone + NADPH + H(+). Its function is as follows. Catalyzes the NAD(P)(+)-dependent oxidation of D-glucose to D-gluconate via gluconolactone. Can utilize both NAD(+) and NADP(+) as electron acceptor. Is involved in the degradation of glucose through a non-phosphorylative variant of the Entner-Doudoroff pathway. This chain is Glucose 1-dehydrogenase 1, found in Caldivirga maquilingensis (strain ATCC 700844 / DSM 13496 / JCM 10307 / IC-167).